A 324-amino-acid polypeptide reads, in one-letter code: Proto-oncogene Mas (324 aa).

The Extracellular portion of the chain corresponds to 1–35 (MDQSNMTSFAEEKAMNTSSRNASLGTSHPPIPIVH). N-linked (GlcNAc...) asparagine glycans are attached at residues Asn5, Asn16, and Asn21. Residues 36–60 (WVIMSISPLGFVENGILLWFLCFRM) form a helical membrane-spanning segment. Residues 61 to 64 (RRNP) are Cytoplasmic-facing. The helical transmembrane segment at 65–86 (FTVYITHLSIADISLLFCIFIL) threads the bilayer. Residues 87 to 103 (SIDYALDYELSSGHYYT) lie on the Extracellular side of the membrane. Residues 104–127 (IVTLSVTFLFGYNTGLYLLTAISV) form a helical membrane-spanning segment. Topologically, residues 128 to 148 (ERCLSVLYPIWYRCHRPKHQS) are cytoplasmic. A helical transmembrane segment spans residues 149-171 (AFVCALLWALSCLVTTMEYVMCI). The Extracellular segment spans residues 172–184 (DSGEESHSQSDCR). A helical membrane pass occupies residues 185–205 (AVIIFIAILSFLVFTPLMLVS). Residues 206–223 (STILVVKIRKNTWASHSS) are Cytoplasmic-facing. Residues 224 to 244 (KLYIVIMVTIIIFLIFAMPMR) traverse the membrane as a helical segment. Over 245-262 (VLYLLYYEYWSTFGNLHN) the chain is Extracellular. A helical transmembrane segment spans residues 263-283 (ISLLFSTINSSANPFIYFFVG). At 284 to 324 (SSKKKRFRESLKVVLTRAFKDEMQPRRQEGNGNTVSIETVV) the chain is on the cytoplasmic side.

The protein belongs to the G-protein coupled receptor 1 family. Interacts with AGTR1. Interacts with FLNA (via filamin repeat 21); increases PKA-mediated phosphorylation of FLNA. Expressed in platelets.

The protein localises to the cell membrane. Its function is as follows. Receptor for angiotensin 1-7. Acts specifically as a functional antagonist of AGTR1 (angiotensin-2 type 1 receptor), although it up-regulates AGTR1 receptor levels. Positive regulation of AGTR1 levels occurs through activation of the G-proteins GNA11 and GNAQ, and stimulation of the protein kinase C signaling cascade. The antagonist effect on AGTR1 function is probably due to AGTR1 being physically altered by MAS1. The chain is Proto-oncogene Mas (Mas1) from Rattus norvegicus (Rat).